The following is a 312-amino-acid chain: Tyrosine recombinase XerC (312 aa).

The Core-binding (CB) domain occupies 10 to 101 (PDLQAARESW…GIRSLLRFLE (92 aa)). Residues 122-306 (SLPKPLTASD…DTARLLEIYE (185 aa)) enclose the Tyr recombinase domain. Active-site residues include Arg165, Lys190, His258, Arg261, and His284. Residue Tyr293 is the O-(3'-phospho-DNA)-tyrosine intermediate of the active site.

It belongs to the 'phage' integrase family. XerC subfamily. Forms a cyclic heterotetrameric complex composed of two molecules of XerC and two molecules of XerD.

The protein resides in the cytoplasm. Its function is as follows. Site-specific tyrosine recombinase, which acts by catalyzing the cutting and rejoining of the recombining DNA molecules. The XerC-XerD complex is essential to convert dimers of the bacterial chromosome into monomers to permit their segregation at cell division. It also contributes to the segregational stability of plasmids. This chain is Tyrosine recombinase XerC, found in Mesorhizobium japonicum (strain LMG 29417 / CECT 9101 / MAFF 303099) (Mesorhizobium loti (strain MAFF 303099)).